Consider the following 141-residue polypeptide: Hemoglobin subunit alpha-1/2/3 (141 aa).

In terms of domain architecture, Globin spans 1 to 141 (VLSPADKTNV…VGTVLTSKYR (141 aa)). The residue at position 3 (Ser3) is a Phosphoserine. Position 7 is an N6-succinyllysine (Lys7). The residue at position 8 (Thr8) is a Phosphothreonine. The residue at position 11 (Lys11) is an N6-succinyllysine. The residue at position 16 (Lys16) is an N6-acetyllysine; alternate. Position 16 is an N6-succinyllysine; alternate (Lys16). Tyr24 carries the phosphotyrosine modification. Ser35 carries the post-translational modification Phosphoserine. Position 40 is an N6-succinyllysine (Lys40). Ser49 carries the phosphoserine modification. Position 58 (His58) interacts with O2. His87 is a heme b binding site. Ser102 carries the phosphoserine modification. Thr108 is modified (phosphothreonine). 2 positions are modified to phosphoserine: Ser124 and Ser131. 2 positions are modified to phosphothreonine: Thr134 and Thr137. At Ser138 the chain carries Phosphoserine.

This sequence belongs to the globin family. Heterotetramer of two alpha chains and two beta chains. In terms of tissue distribution, red blood cells.

In terms of biological role, involved in oxygen transport from the lung to the various peripheral tissues. In Macaca nemestrina (Pig-tailed macaque), this protein is Hemoglobin subunit alpha-1/2/3.